A 170-amino-acid polypeptide reads, in one-letter code: UPF0316 protein CLK_3798 (170 aa).

2 helical membrane-spanning segments follow: residues 1–21 and 36–56; these read MLSY…LMTI and IIGF…LSGI.

This sequence belongs to the UPF0316 family.

The protein resides in the cell membrane. This chain is UPF0316 protein CLK_3798, found in Clostridium botulinum (strain Loch Maree / Type A3).